Reading from the N-terminus, the 81-residue chain is Large ribosomal subunit protein bL31B (81 aa).

Belongs to the bacterial ribosomal protein bL31 family. Type B subfamily. In terms of assembly, part of the 50S ribosomal subunit.

The sequence is that of Large ribosomal subunit protein bL31B from Borrelia garinii subsp. bavariensis (strain ATCC BAA-2496 / DSM 23469 / PBi) (Borreliella bavariensis).